The sequence spans 745 residues: Arf-GAP with coiled-coil, ANK repeat and PH domain-containing protein 1 (745 aa).

The 226-residue stretch at M1–Q226 folds into the BAR domain. Residues M1 to L382 form a required for formation of endosomal tubules when overexpressed with PIP5K1C region. The 96-residue stretch at G265–A360 folds into the PH domain. The region spanning G405–R527 is the Arf-GAP domain. The interval G405–L745 is required for interaction with GULP1. The segment at C420–C443 adopts a C4-type zinc-finger fold. The residue at position 485 (Y485) is a 3'-nitrotyrosine. The tract at residues E525 to L567 is prevents interaction with ITGB1 when S-554 is not phosphorylated. The disordered stretch occupies residues E525–S569. A compositionally biased stretch (pro residues) spans R537–P546. S555 is subject to Phosphoserine; by PKB. 3 ANK repeats span residues E607–Q640, Q644–V673, and E677–A707.

In terms of assembly, banana-shaped homodimer laterally assembling into tetramers, the tetramers further pack helically onto the membrane. Interacts with GTP-bound ARF6. Interacts with third cytoplasmic loop of SLC2A4/GLUT4. Interacts with CLTC. Interacts with GULP1. Forms a complex with GDP-bound ARF6 and GULP1. Interacts with ITGB1; required for ITGB1 recycling. In terms of processing, phosphorylation at Ser-555 by PKB is required for interaction with ITGB1, export of ITGB1 from recycling endosomes to the cell surface and ITGB1-dependent cell migration.

The protein localises to the recycling endosome membrane. Its activity is regulated as follows. GAP activity stimulated by phosphatidylinositol 4,5-bisphosphate (PIP2) and phosphatidic acid. Its function is as follows. GTPase-activating protein (GAP) for ADP ribosylation factor 6 (ARF6) required for clathrin-dependent export of proteins from recycling endosomes to trans-Golgi network and cell surface. Required for regulated export of ITGB1 from recycling endosomes to the cell surface and ITGB1-dependent cell migration. In Bos taurus (Bovine), this protein is Arf-GAP with coiled-coil, ANK repeat and PH domain-containing protein 1 (ACAP1).